A 378-amino-acid polypeptide reads, in one-letter code: MTDSPVLALAKDLISRQSVTPEDAGCQDLMIERLKALGFEIEVMVFEDTTNFWARRGNEAPLFAFAGHTDVVPAGKLEQWDTPPFEPTIIDGYLHGRGAADMKGSLAAMVVAVERFIAEHPDHKGSIGFLITSDEEGPFINGTVRVVEALMERGENIDMCIVGEPSSTEIVGDVVKNGRRGSITGDLTVKGTQGHVAYPHLANNPVHASLLAIHELATTEWDKGNDYFPPTSFQIPNVSAGTGASNVIPGEFNVQFNLRFSTELNNDTIVQRVTETLDKHDLNYDLHWTFNGDPFLTDTGALLDAVVAAVAEVNNTKPALLTTGGTSDGRFIARMGGQVVELGPVNATIHKVNECVKVDDLEKLTDMYENTLKHLLAK.

A Zn(2+)-binding site is contributed by His-68. Asp-70 is a catalytic residue. Asp-101 is a Zn(2+) binding site. Residue Glu-135 is the Proton acceptor of the active site. Residues Glu-136, Glu-164, and His-350 each coordinate Zn(2+).

The protein belongs to the peptidase M20A family. DapE subfamily. Homodimer. Zn(2+) is required as a cofactor. The cofactor is Co(2+).

It carries out the reaction N-succinyl-(2S,6S)-2,6-diaminopimelate + H2O = (2S,6S)-2,6-diaminopimelate + succinate. Its pathway is amino-acid biosynthesis; L-lysine biosynthesis via DAP pathway; LL-2,6-diaminopimelate from (S)-tetrahydrodipicolinate (succinylase route): step 3/3. In terms of biological role, catalyzes the hydrolysis of N-succinyl-L,L-diaminopimelic acid (SDAP), forming succinate and LL-2,6-diaminopimelate (DAP), an intermediate involved in the bacterial biosynthesis of lysine and meso-diaminopimelic acid, an essential component of bacterial cell walls. In Vibrio parahaemolyticus serotype O3:K6 (strain RIMD 2210633), this protein is Succinyl-diaminopimelate desuccinylase.